Consider the following 471-residue polypeptide: ATP synthase subunit beta (471 aa).

156–163 (GGAGVGKT) contributes to the ATP binding site.

The protein belongs to the ATPase alpha/beta chains family. In terms of assembly, F-type ATPases have 2 components, CF(1) - the catalytic core - and CF(0) - the membrane proton channel. CF(1) has five subunits: alpha(3), beta(3), gamma(1), delta(1), epsilon(1). CF(0) has three main subunits: a(1), b(2) and c(9-12). The alpha and beta chains form an alternating ring which encloses part of the gamma chain. CF(1) is attached to CF(0) by a central stalk formed by the gamma and epsilon chains, while a peripheral stalk is formed by the delta and b chains.

Its subcellular location is the cell membrane. The enzyme catalyses ATP + H2O + 4 H(+)(in) = ADP + phosphate + 5 H(+)(out). Functionally, produces ATP from ADP in the presence of a proton gradient across the membrane. The catalytic sites are hosted primarily by the beta subunits. This is ATP synthase subunit beta from Mycoplasmoides gallisepticum (strain R(low / passage 15 / clone 2)) (Mycoplasma gallisepticum).